The sequence spans 726 residues: Methionine--tRNA ligase (726 aa).

A 'HIGH' region motif is present at residues 12–22 (PYVNNIPHLGN). Zn(2+)-binding residues include Cys143, Cys146, Cys155, and Cys158. The 'KMSKS' region signature appears at 330 to 334 (KFSKS). Lys333 is an ATP binding site. One can recognise a tRNA-binding domain in the interval 562–667 (FSEQICLKTV…DNPIPGERVI (106 aa)).

The protein belongs to the class-I aminoacyl-tRNA synthetase family. MetG type 1 subfamily. As to quaternary structure, homodimer. The cofactor is Zn(2+).

The protein localises to the cytoplasm. It carries out the reaction tRNA(Met) + L-methionine + ATP = L-methionyl-tRNA(Met) + AMP + diphosphate. Is required not only for elongation of protein synthesis but also for the initiation of all mRNA translation through initiator tRNA(fMet) aminoacylation. This Borrelia recurrentis (strain A1) protein is Methionine--tRNA ligase.